A 327-amino-acid polypeptide reads, in one-letter code: Aspartate--ammonia ligase (327 aa).

It belongs to the class-II aminoacyl-tRNA synthetase family. AsnA subfamily.

It is found in the cytoplasm. The catalysed reaction is L-aspartate + NH4(+) + ATP = L-asparagine + AMP + diphosphate + H(+). It participates in amino-acid biosynthesis; L-asparagine biosynthesis; L-asparagine from L-aspartate (ammonia route): step 1/1. This Bacillus mycoides (strain KBAB4) (Bacillus weihenstephanensis) protein is Aspartate--ammonia ligase.